Reading from the N-terminus, the 471-residue chain is Glycosyl hydrolase family 109 protein 1 (471 aa).

Positions 1 to 15 (MIKNLSTFFVGIALS) are cleaved as a signal peptide. C16 carries the N-palmitoyl cysteine lipid modification. C16 carries the S-diacylglycerol cysteine lipid modification. NAD(+)-binding positions include 70–71 (MR), D92, 141–144 (WKHH), 161–162 (EV), and N190. Substrate contacts are provided by residues Y219, R235, 247 to 250 (YATH), and Y325. Y247 contacts NAD(+).

The protein belongs to the Gfo/Idh/MocA family. Glycosyl hydrolase 109 subfamily. Requires NAD(+) as cofactor.

The protein localises to the cell membrane. Functionally, glycosidase. The sequence is that of Glycosyl hydrolase family 109 protein 1 from Phocaeicola vulgatus (strain ATCC 8482 / DSM 1447 / JCM 5826 / CCUG 4940 / NBRC 14291 / NCTC 11154) (Bacteroides vulgatus).